Here is a 43-residue protein sequence, read N- to C-terminus: Defensin-B (43 aa).

Disulfide bonds link Cys3-Cys34, Cys20-Cys39, and Cys24-Cys41.

It localises to the secreted. Functionally, antibacterial protein. Strong activity against the Gram-positive bacteria M.luteus, B.megaterium and S.aureus. Reduced activity against Gram-positive bacterium B.subtilis and weak activity against Gram-negative bacterium X.japonicus. No detectable activity against the Gram-negative bacteria E.asbriae, E.coli, P.aeruginosa and S.marcescens. The sequence is that of Defensin-B from Anomala cuprea (Cupreous chafer beetle).